Here is a 394-residue protein sequence, read N- to C-terminus: 4-O-methyl-glucuronoyl methylesterase (394 aa).

Positions 1–18 (MVHLTPALLLASAAFAAA) are cleaved as a signal peptide. Intrachain disulfides connect cysteine 29–cysteine 63, cysteine 210–cysteine 345, and cysteine 242–cysteine 317. The GXSYXG catalytic site motif signature appears at 209–214 (GCSRNG). Catalysis depends on serine 211, which acts as the Nucleophile. Substrate contacts are provided by lysine 215, glutamine 257, glutamate 265, and tryptophan 308. The Proton donor/acceptor role is filled by histidine 344.

It belongs to the carbohydrate esterase 15 (CE15) family.

The protein localises to the secreted. The enzyme catalyses a 4-O-methyl-alpha-D-glucuronosyl ester derivative + H2O = 4-O-methyl-alpha-D-glucuronate derivative + an alcohol + H(+). Functionally, glucuronoyl esterase which may play a significant role in biomass degradation, as it is considered to disconnect hemicellulose from lignin through the hydrolysis of the ester bond between 4-O-methyl-D-glucuronic acid residues of glucuronoxylans and aromatic alcohols of lignin. The polypeptide is 4-O-methyl-glucuronoyl methylesterase (Neurospora crassa (strain ATCC 24698 / 74-OR23-1A / CBS 708.71 / DSM 1257 / FGSC 987)).